The following is a 447-amino-acid chain: Phosphoglucosamine mutase (447 aa).

S101 acts as the Phosphoserine intermediate in catalysis. Mg(2+) is bound by residues S101, D242, D244, and D246. Phosphoserine is present on S101.

It belongs to the phosphohexose mutase family. Mg(2+) serves as cofactor. Post-translationally, activated by phosphorylation.

The enzyme catalyses alpha-D-glucosamine 1-phosphate = D-glucosamine 6-phosphate. In terms of biological role, catalyzes the conversion of glucosamine-6-phosphate to glucosamine-1-phosphate. This chain is Phosphoglucosamine mutase, found in Xanthobacter autotrophicus (strain ATCC BAA-1158 / Py2).